The sequence spans 166 residues: Bacterial microcompartment shell protein EutK (166 aa).

The BMC domain occupies 4–88; that stretch reads ALGLLEVDGM…PDDDTQWLVT (85 aa). Residues 109–165 enclose the EutK-Ctail domain; that stretch reads ESADELLALLTSVRQGMTAGEVAAHFGWPLEKARNALEQLFSAGTLRKRSSRYRLKP.

Belongs to the bacterial microcompartments protein family. Monomeric in solution.

The protein localises to the bacterial microcompartment. Its pathway is amine and polyamine degradation; ethanolamine degradation. In terms of biological role, probably a minor component of the bacterial microcompartment (BMC) shell dedicated to ethanolamine degradation. It might bind nucleic acids. The chain is Bacterial microcompartment shell protein EutK (eutK) from Escherichia coli (strain K12).